A 772-amino-acid polypeptide reads, in one-letter code: MGGFMKRSQYKFYYKLITFFCLLSTIPVILVGLFSYEHSQKTAISNVSEEKFDTLQQTQQSIEHILKTVDHSLTHYVSSPPLLRTLSEPLHSDQFQIYNQVNQELNYLQSFDTDLSNMTLVSYTKKWYMNNSGLYRLNTDTLHEAASAYTKQKASRSYWTLEENNHLISTKEGTAENCRYNINLIKQLPLNSTNTKGLAAASIPSCSLVKNMPGYSNANNLFIIDEKGLIILHNNMSDVGESLHNDGFVQKVLAQTANSGQFETVIDRIHYKVTYQKSDYNAWTYFSLVSLPELKKEAKSIGWITFAVCLILLTLSLLFSWLGSRHFYKPIRVLYESFARHGAIQEKQQPPQNEFELIEQSFKQLKDRNDDLEETMKQQATHLQQYFMVRLMLGKLTDEEVDNRFESLGLKQNWRHLALLVLQIDTLNHTPYEKKDMDLLLFAVNSLIERNIPTDKHLAPAVVDKQQATILINQSGTKEEFMAELNETARMIQEKAEAELQLSVSIGISQPFDVLTKAKTAYAEGSEALKYRLKAENKSIIFYEDLDQKKTFKTHFPKQLQHELFDAVKAGDKEKADKCLHAILQAIFTQNTNPYQFQIAIARFLNHVIELMHVLGIELFELEENKMLYDQIFELKTFEDTENWLKNEFIDPMTDKVNARADAQYKNISDNIIHIIHHEFESELTLDEIARRLHYNPNYLSSIFKKEMGISFSEYVSSYRHHMAKSWLAETDMAVKDIAEKLKYKNSQNFIRSFKKLEGITPGNYRQQKRSM.

The next 2 helical transmembrane spans lie at Leu-16 to Tyr-36 and Ile-301 to Trp-321. The 99-residue stretch at Asp-670–Gln-768 folds into the HTH araC/xylS-type domain. DNA-binding regions (H-T-H motif) lie at residues Asp-687–Met-708 and Val-735–Glu-758.

Its subcellular location is the cell membrane. This is an uncharacterized protein from Bacillus subtilis (strain 168).